The sequence spans 775 residues: MAPAGHILTLLLWGHLLELWTPGHSANPSYPRLRLSHKELLELNRTSIFQSPLGFLDLHTMLLDEYQERLFVGGRDLVYSLNLERVSDGYREIYWPSTAVKVEECIMKGKDANECANYIRVLHHYNRTHLLTCATGAFDPHCAFIRVGHHSEEPLFHLESHRSERGRGRCPFDPNSSFVSTLVGNELFAGLYSDYWGRDSAIFRSMGKLGHIRTEHDDERLLKEPKFVGSYMIPDNEDRDDNKMYFFFTEKALEAENNAHTIYTRVGRLCVNDMGGQRILVNKWSTFLKARLVCSVPGMNGIDTYFDELEDVFLLPTRDPKNPVIFGLFNTTSNIFRGHAVCVYHMSSIREAFNGPYAHKEGPEYHWSLYEGKVPYPRPGSCASKVNGGKYGTTKDYPDDAIRFARMHPLMYQPIKPVHKKPILVKTDGKYNLRQLAVDRVEAEDGQYDVLFIGTDTGIVLKVITIYNQETEWMEEVILEELQIFKDPAPIISMEISSKRQQLYIGSASAVAQVRFHHCDMYGSACADCCLARDPYCAWDGISCSRYYPTGAHAKRRFRRQDVRHGNAAQQCFGQQFVGDALDRTEERLAYGIESNSTLLECTPRSLQAKVIWFVQKGRDVRKEEVKTDDRVVKMDLGLLFLRVRKSDAGTYFCQTVEHNFVHTVRKITLEVVEEHKVEGMFHKDHEEERHHKMPCPPLSGMSQGTKPWYKEFLQLIGYSNFQRVEEYCEKVWCTDKKRKKLKMSPSKWKYANPQEKRLRSKAEHFRLPRHTLLS.

Residues 1–25 (MAPAGHILTLLLWGHLLELWTPGHS) form the signal peptide. In terms of domain architecture, Sema spans 32 to 516 (RLRLSHKELL…SASAVAQVRF (485 aa)). N-linked (GlcNAc...) asparagine glycosylation is present at N44. A disulfide bridge connects residues C105 and C115. N-linked (GlcNAc...) asparagine glycosylation occurs at N126. C133 and C142 are joined by a disulfide. N175 and N330 each carry an N-linked (GlcNAc...) asparagine glycan. 3 disulfides stabilise this stretch: C270/C382, C294/C342, and C519/C537. The Ig-like C2-type domain maps to 581-669 (ALDRTEERLA…NFVHTVRKIT (89 aa)). Residue N596 is glycosylated (N-linked (GlcNAc...) asparagine). C654 and C729 are oxidised to a cystine.

This sequence belongs to the semaphorin family. In terms of assembly, interacts with PLXND1. In terms of tissue distribution, detected in neurons in the thalamus. Detected in embryonic vasculature. Developing lungs, developing skeletal elements and ventral horns of the developing neural tube. Correlates positively with tumor progression.

Its subcellular location is the secreted. Its function is as follows. Plays an important role in signaling via the cell surface receptor PLXND1. Mediates reorganization of the actin cytoskeleton, leading to the retraction of cell projections. Promotes focal adhesion disassembly and inhibits adhesion of endothelial cells to the extracellular matrix. Regulates angiogenesis, both during embryogenesis and after birth. Can down-regulate sprouting angiogenesis. Required for normal vascular patterning during embryogenesis. Plays an important role in ensuring the specificity of synapse formation. This is Semaphorin-3E (Sema3e) from Mus musculus (Mouse).